We begin with the raw amino-acid sequence, 316 residues long: 4-hydroxy-3-methylbut-2-enyl diphosphate reductase (316 aa).

Cys12 contributes to the [4Fe-4S] cluster binding site. Residues His41 and His74 each contribute to the (2E)-4-hydroxy-3-methylbut-2-enyl diphosphate site. Residues His41 and His74 each contribute to the dimethylallyl diphosphate site. Isopentenyl diphosphate contacts are provided by His41 and His74. Cys96 is a binding site for [4Fe-4S] cluster. Position 124 (His124) interacts with (2E)-4-hydroxy-3-methylbut-2-enyl diphosphate. His124 is a dimethylallyl diphosphate binding site. His124 contributes to the isopentenyl diphosphate binding site. Residue Glu126 is the Proton donor of the active site. Thr169 provides a ligand contact to (2E)-4-hydroxy-3-methylbut-2-enyl diphosphate. Residue Cys199 participates in [4Fe-4S] cluster binding. Residues Ser227, Ser228, Asn229, and Ser271 each contribute to the (2E)-4-hydroxy-3-methylbut-2-enyl diphosphate site. Dimethylallyl diphosphate-binding residues include Ser227, Ser228, Asn229, and Ser271. Residues Ser227, Ser228, Asn229, and Ser271 each coordinate isopentenyl diphosphate.

The protein belongs to the IspH family. [4Fe-4S] cluster is required as a cofactor.

It carries out the reaction isopentenyl diphosphate + 2 oxidized [2Fe-2S]-[ferredoxin] + H2O = (2E)-4-hydroxy-3-methylbut-2-enyl diphosphate + 2 reduced [2Fe-2S]-[ferredoxin] + 2 H(+). The enzyme catalyses dimethylallyl diphosphate + 2 oxidized [2Fe-2S]-[ferredoxin] + H2O = (2E)-4-hydroxy-3-methylbut-2-enyl diphosphate + 2 reduced [2Fe-2S]-[ferredoxin] + 2 H(+). It functions in the pathway isoprenoid biosynthesis; dimethylallyl diphosphate biosynthesis; dimethylallyl diphosphate from (2E)-4-hydroxy-3-methylbutenyl diphosphate: step 1/1. The protein operates within isoprenoid biosynthesis; isopentenyl diphosphate biosynthesis via DXP pathway; isopentenyl diphosphate from 1-deoxy-D-xylulose 5-phosphate: step 6/6. In terms of biological role, catalyzes the conversion of 1-hydroxy-2-methyl-2-(E)-butenyl 4-diphosphate (HMBPP) into a mixture of isopentenyl diphosphate (IPP) and dimethylallyl diphosphate (DMAPP). Acts in the terminal step of the DOXP/MEP pathway for isoprenoid precursor biosynthesis. This Stenotrophomonas maltophilia (strain R551-3) protein is 4-hydroxy-3-methylbut-2-enyl diphosphate reductase.